The primary structure comprises 113 residues: Cell cycle protein GpsB (113 aa).

Residues 36-68 (LDMVIKDYSTFTQEIEALQAENIRLVQELDNAP) are a coiled coil.

This sequence belongs to the GpsB family. As to quaternary structure, forms polymers through the coiled coil domains. Interacts with PBP1, MreC and EzrA.

The protein resides in the cytoplasm. Divisome component that associates with the complex late in its assembly, after the Z-ring is formed, and is dependent on DivIC and PBP2B for its recruitment to the divisome. Together with EzrA, is a key component of the system that regulates PBP1 localization during cell cycle progression. Its main role could be the removal of PBP1 from the cell pole after pole maturation is completed. Also contributes to the recruitment of PBP1 to the division complex. Not essential for septum formation. The sequence is that of Cell cycle protein GpsB from Listeria innocua serovar 6a (strain ATCC BAA-680 / CLIP 11262).